Consider the following 352-residue polypeptide: MDYQVSSPIYDIDYGPSEPCRKIDVKQMGAQLLPPLYSLVFLFGFVGNMLVVLILINCKRLKSMTDIYLLNLAISDLLFLFTIPFWAHYAAGQWDFGNTMCQFLTALYFIGFFSGIFFIILLTIDRYLAIVHAVFALKARTVTFGVVTSVITWVVAVFASLPGIIFTRSQKEGYHYSCSPHFPFSQYRFWKNFETLKMVILGLVLPLLVMVICYSGILKTLLRCRNEKKRHRAVRLIFTIMIVYFLFWAPYNIVLLINTYPDFFGVNNCNSSNRLDQAMQVTETLGMTHCCVNPIIYAFVGEKFRNYLVIFFQKHIAKRFCKCCSIFQKEAPERANSVYTRSTGEQEISVGL.

Residues 1-30 lie on the Extracellular side of the membrane; that stretch reads MDYQVSSPIYDIDYGPSEPCRKIDVKQMGA. Tyr3 carries the sulfotyrosine modification. Ser6 and Ser7 each carry an O-linked (GalNAc...) serine glycan. Sulfotyrosine occurs at positions 10 and 14. Cystine bridges form between Cys20/Cys269 and Cys101/Cys178. A helical transmembrane segment spans residues 31 to 58; sequence QLLPPLYSLVFLFGFVGNMLVVLILINC. Residues 59–68 lie on the Cytoplasmic side of the membrane; that stretch reads KRLKSMTDIY. The chain crosses the membrane as a helical span at residues 69–89; the sequence is LLNLAISDLLFLFTIPFWAHY. Topologically, residues 90–102 are extracellular; it reads AAGQWDFGNTMCQ. The chain crosses the membrane as a helical span at residues 103-124; the sequence is FLTALYFIGFFSGIFFIILLTI. Topologically, residues 125-141 are cytoplasmic; that stretch reads DRYLAIVHAVFALKART. A helical membrane pass occupies residues 142-166; sequence VTFGVVTSVITWVVAVFASLPGIIF. The Extracellular portion of the chain corresponds to 167 to 198; it reads TRSQKEGYHYSCSPHFPFSQYRFWKNFETLKM. Residues 199–218 traverse the membrane as a helical segment; the sequence is VILGLVLPLLVMVICYSGIL. Over 219-235 the chain is Cytoplasmic; sequence KTLLRCRNEKKRHRAVR. A helical transmembrane segment spans residues 236 to 260; the sequence is LIFTIMIVYFLFWAPYNIVLLINTY. The Extracellular segment spans residues 261-277; that stretch reads PDFFGVNNCNSSNRLDQ. A helical transmembrane segment spans residues 278-301; that stretch reads AMQVTETLGMTHCCVNPIIYAFVG. Topologically, residues 302-352 are cytoplasmic; that stretch reads EKFRNYLVIFFQKHIAKRFCKCCSIFQKEAPERANSVYTRSTGEQEISVGL. S-palmitoyl cysteine attachment occurs at residues Cys321, Cys323, and Cys324. 3 positions are modified to phosphoserine; by BARK1: Ser337, Ser342, and Ser349.

The protein belongs to the G-protein coupled receptor 1 family. Interacts with PRAF2. Efficient ligand binding to CCL3/MIP-1alpha and CCL4/MIP-1beta requires sulfation, O-glycosylation and sialic acid modifications. Glycosylation on Ser-6 is required for efficient binding of CCL4. Interacts with GRK2. Interacts with ARRB1 and ARRB2. Interacts with CNIH4. Interacts with S100A4; this interaction stimulates T-lymphocyte chemotaxis. Post-translationally, sulfated on at least 2 of the N-terminal tyrosines. Sulfation is required for efficient binding of the chemokines, CCL3 and CCL4. Palmitoylation in the C-terminal is important for cell surface expression. In terms of processing, phosphorylation on serine residues in the C-terminal is stimulated by binding CC chemokines especially by APO-RANTES. Post-translationally, O-glycosylated, but not N-glycosylated. Ser-6 appears to be the major site even if Ser-7 may be also O-glycosylated. Also sialylated glycans present which contribute to chemokine binding. Ser-17 may also be glycosylated and, if so, with small moieties such as a T-antigen.

The protein resides in the cell membrane. In terms of biological role, receptor for a number of inflammatory CC-chemokines including CCL3/MIP-1-alpha, CCL4/MIP-1-beta and RANTES and subsequently transduces a signal by increasing the intracellular calcium ion level. May play a role in the control of granulocytic lineage proliferation or differentiation. Participates in T-lymphocyte migration to the infection site by acting as a chemotactic receptor. This is C-C chemokine receptor type 5 (CCR5) from Saimiri sciureus (Common squirrel monkey).